The chain runs to 201 residues: FMN-dependent NADH:quinone oxidoreductase (201 aa).

FMN is bound by residues Ser-9, 16–18 (SVS), and 93–96 (MYNF).

Belongs to the azoreductase type 1 family. As to quaternary structure, homodimer. FMN serves as cofactor.

It carries out the reaction 2 a quinone + NADH + H(+) = 2 a 1,4-benzosemiquinone + NAD(+). It catalyses the reaction N,N-dimethyl-1,4-phenylenediamine + anthranilate + 2 NAD(+) = 2-(4-dimethylaminophenyl)diazenylbenzoate + 2 NADH + 2 H(+). In terms of biological role, quinone reductase that provides resistance to thiol-specific stress caused by electrophilic quinones. Functionally, also exhibits azoreductase activity. Catalyzes the reductive cleavage of the azo bond in aromatic azo compounds to the corresponding amines. This is FMN-dependent NADH:quinone oxidoreductase from Gluconacetobacter diazotrophicus (strain ATCC 49037 / DSM 5601 / CCUG 37298 / CIP 103539 / LMG 7603 / PAl5).